The following is an 83-amino-acid chain: RNA-binding protein Hfq (83 aa).

The Sm domain occupies 11-71; that stretch reads DVFLNYIRKN…ISTIMPASPV (61 aa).

Belongs to the Hfq family. In terms of assembly, homohexamer.

Its function is as follows. RNA chaperone that binds small regulatory RNA (sRNAs) and mRNAs to facilitate mRNA translational regulation in response to envelope stress, environmental stress and changes in metabolite concentrations. Also binds with high specificity to tRNAs. The polypeptide is RNA-binding protein Hfq (Rhodospirillum rubrum (strain ATCC 11170 / ATH 1.1.1 / DSM 467 / LMG 4362 / NCIMB 8255 / S1)).